A 372-amino-acid polypeptide reads, in one-letter code: 4-hydroxy-3-methylbut-2-en-1-yl diphosphate synthase (flavodoxin) (372 aa).

Positions 270, 273, 305, and 312 each coordinate [4Fe-4S] cluster.

This sequence belongs to the IspG family. Requires [4Fe-4S] cluster as cofactor.

The catalysed reaction is (2E)-4-hydroxy-3-methylbut-2-enyl diphosphate + oxidized [flavodoxin] + H2O + 2 H(+) = 2-C-methyl-D-erythritol 2,4-cyclic diphosphate + reduced [flavodoxin]. It functions in the pathway isoprenoid biosynthesis; isopentenyl diphosphate biosynthesis via DXP pathway; isopentenyl diphosphate from 1-deoxy-D-xylulose 5-phosphate: step 5/6. Its function is as follows. Converts 2C-methyl-D-erythritol 2,4-cyclodiphosphate (ME-2,4cPP) into 1-hydroxy-2-methyl-2-(E)-butenyl 4-diphosphate. In Salmonella gallinarum (strain 287/91 / NCTC 13346), this protein is 4-hydroxy-3-methylbut-2-en-1-yl diphosphate synthase (flavodoxin).